We begin with the raw amino-acid sequence, 245 residues long: Carboxy-S-adenosyl-L-methionine synthase (245 aa).

Residues Tyr-42, 67–69, 92–93, 120–121, Asn-135, and Arg-202 contribute to the S-adenosyl-L-methionine site; these read GCS, DN, and DI.

This sequence belongs to the class I-like SAM-binding methyltransferase superfamily. Cx-SAM synthase family. In terms of assembly, homodimer.

The enzyme catalyses prephenate + S-adenosyl-L-methionine = carboxy-S-adenosyl-L-methionine + 3-phenylpyruvate + H2O. In terms of biological role, catalyzes the conversion of S-adenosyl-L-methionine (SAM) to carboxy-S-adenosyl-L-methionine (Cx-SAM). This is Carboxy-S-adenosyl-L-methionine synthase from Vibrio campbellii (strain ATCC BAA-1116).